The following is a 318-amino-acid chain: Ubiquitin-like domain-containing CTD phosphatase 1 (318 aa).

The Ubiquitin-like domain maps to 3 to 81; sequence LSLIIKWGGQ…IMMMGTREES (79 aa). The region spanning 133 to 294 is the FCP1 homology domain; that stretch reads PREGKKLLVL…LKLSQYLKEI (162 aa). Residues aspartate 143, aspartate 145, and aspartate 253 each coordinate Mg(2+).

The cofactor is Mg(2+).

It is found in the nucleus. It catalyses the reaction O-phospho-L-seryl-[protein] + H2O = L-seryl-[protein] + phosphate. The enzyme catalyses O-phospho-L-threonyl-[protein] + H2O = L-threonyl-[protein] + phosphate. In terms of biological role, dephosphorylates 26S nuclear proteasomes, thereby decreasing their proteolytic activity. Recruited to the 19S regulatory particle of the 26S proteasome where it dephosphorylates 19S component psmc2 which impairs psmc2 ATPase activity and disrupts 26S proteasome assembly. Has also been reported to stimulate the proteolytic activity of the 26S proteasome. This Xenopus tropicalis (Western clawed frog) protein is Ubiquitin-like domain-containing CTD phosphatase 1 (ublcp1).